The following is a 299-amino-acid chain: Ribosomal protein L11 methyltransferase (299 aa).

S-adenosyl-L-methionine contacts are provided by T139, G163, D185, and N232.

The protein belongs to the methyltransferase superfamily. PrmA family.

It localises to the cytoplasm. The catalysed reaction is L-lysyl-[protein] + 3 S-adenosyl-L-methionine = N(6),N(6),N(6)-trimethyl-L-lysyl-[protein] + 3 S-adenosyl-L-homocysteine + 3 H(+). Its function is as follows. Methylates ribosomal protein L11. The protein is Ribosomal protein L11 methyltransferase of Crocosphaera subtropica (strain ATCC 51142 / BH68) (Cyanothece sp. (strain ATCC 51142)).